The following is a 344-amino-acid chain: Putative cyclin-Y-like protein 3 (344 aa).

Residues 40-170 (ERYANRSLAI…FLELLEFNIH (131 aa)) enclose the Cyclin N-terminal domain.

It belongs to the cyclin family. Cyclin Y subfamily.

This chain is Putative cyclin-Y-like protein 3 (CCNYL3), found in Homo sapiens (Human).